We begin with the raw amino-acid sequence, 333 residues long: Anthranilate phosphoribosyltransferase (333 aa).

5-phospho-alpha-D-ribose 1-diphosphate contacts are provided by residues glycine 80, 83–84 (GD), serine 88, 90–93 (NIST), 108–116 (KHGNRSVSS), and serine 120. An anthranilate-binding site is contributed by glycine 80. A Mg(2+)-binding site is contributed by serine 92. Asparagine 111 is an anthranilate binding site. Position 166 (arginine 166) interacts with anthranilate. Mg(2+) is bound by residues aspartate 224 and glutamate 225.

The protein belongs to the anthranilate phosphoribosyltransferase family. Homodimer. Requires Mg(2+) as cofactor.

The catalysed reaction is N-(5-phospho-beta-D-ribosyl)anthranilate + diphosphate = 5-phospho-alpha-D-ribose 1-diphosphate + anthranilate. The protein operates within amino-acid biosynthesis; L-tryptophan biosynthesis; L-tryptophan from chorismate: step 2/5. Its function is as follows. Catalyzes the transfer of the phosphoribosyl group of 5-phosphorylribose-1-pyrophosphate (PRPP) to anthranilate to yield N-(5'-phosphoribosyl)-anthranilate (PRA). This chain is Anthranilate phosphoribosyltransferase, found in Yersinia pseudotuberculosis serotype O:1b (strain IP 31758).